A 220-amino-acid polypeptide reads, in one-letter code: Adenylate kinase (220 aa).

12 to 17 (GAGKGT) is a binding site for ATP. An NMP region spans residues 32-62 (STGDIFRDIVKKENDELGKKIKEIMERGELV). Residues T33, R38, 60-62 (ELV), 88-91 (GYPR), and Q95 contribute to the AMP site. An LID region spans residues 129–166 (ARRICPKCGRIYNLISLPPKEDELCDDCKVKLVQREDD). R130 serves as a coordination point for ATP. Zn(2+) is bound by residues C133 and C136. 139–140 (IY) lines the ATP pocket. Zn(2+) is bound by residues C153 and C156. R163 and R174 together coordinate AMP. Position 202 (I202) interacts with ATP.

This sequence belongs to the adenylate kinase family. In terms of assembly, monomer.

Its subcellular location is the cytoplasm. The catalysed reaction is AMP + ATP = 2 ADP. The protein operates within purine metabolism; AMP biosynthesis via salvage pathway; AMP from ADP: step 1/1. Functionally, catalyzes the reversible transfer of the terminal phosphate group between ATP and AMP. Plays an important role in cellular energy homeostasis and in adenine nucleotide metabolism. In Thermotoga maritima (strain ATCC 43589 / DSM 3109 / JCM 10099 / NBRC 100826 / MSB8), this protein is Adenylate kinase.